Consider the following 145-residue polypeptide: 3-hydroxyacyl-[acyl-carrier-protein] dehydratase FabZ (145 aa).

Residue histidine 47 is part of the active site.

The protein belongs to the thioester dehydratase family. FabZ subfamily.

The protein resides in the cytoplasm. It carries out the reaction a (3R)-hydroxyacyl-[ACP] = a (2E)-enoyl-[ACP] + H2O. Involved in unsaturated fatty acids biosynthesis. Catalyzes the dehydration of short chain beta-hydroxyacyl-ACPs and long chain saturated and unsaturated beta-hydroxyacyl-ACPs. This Polaromonas sp. (strain JS666 / ATCC BAA-500) protein is 3-hydroxyacyl-[acyl-carrier-protein] dehydratase FabZ.